A 941-amino-acid polypeptide reads, in one-letter code: Isoleucine--tRNA ligase (941 aa).

The short motif at 58-68 (PYANGDIHIGH) is the 'HIGH' region element. Glutamate 562 provides a ligand contact to L-isoleucyl-5'-AMP. The 'KMSKS' region motif lies at 603 to 607 (KMSKS). Lysine 606 contacts ATP. Zn(2+) contacts are provided by cysteine 904, cysteine 907, cysteine 924, and cysteine 927.

It belongs to the class-I aminoacyl-tRNA synthetase family. IleS type 1 subfamily. As to quaternary structure, monomer. It depends on Zn(2+) as a cofactor.

It is found in the cytoplasm. The enzyme catalyses tRNA(Ile) + L-isoleucine + ATP = L-isoleucyl-tRNA(Ile) + AMP + diphosphate. Functionally, catalyzes the attachment of isoleucine to tRNA(Ile). As IleRS can inadvertently accommodate and process structurally similar amino acids such as valine, to avoid such errors it has two additional distinct tRNA(Ile)-dependent editing activities. One activity is designated as 'pretransfer' editing and involves the hydrolysis of activated Val-AMP. The other activity is designated 'posttransfer' editing and involves deacylation of mischarged Val-tRNA(Ile). This Alkalilimnicola ehrlichii (strain ATCC BAA-1101 / DSM 17681 / MLHE-1) protein is Isoleucine--tRNA ligase.